Reading from the N-terminus, the 117-residue chain is Large ribosomal subunit protein bL20 (117 aa).

This sequence belongs to the bacterial ribosomal protein bL20 family.

Functionally, binds directly to 23S ribosomal RNA and is necessary for the in vitro assembly process of the 50S ribosomal subunit. It is not involved in the protein synthesizing functions of that subunit. The polypeptide is Large ribosomal subunit protein bL20 (Mesomycoplasma hyopneumoniae (strain J / ATCC 25934 / NCTC 10110) (Mycoplasma hyopneumoniae)).